Here is a 477-residue protein sequence, read N- to C-terminus: Ribulose bisphosphate carboxylase large chain (477 aa).

Positions 1–2 (MS) are excised as a propeptide. Pro3 carries the N-acetylproline modification. Lys14 bears the N6,N6,N6-trimethyllysine mark. Thr173 contributes to the substrate binding site. The Proton acceptor role is filled by Lys175. Lys177 contacts substrate. 3 residues coordinate Mg(2+): Lys201, Asp203, and Glu204. Lys201 is subject to N6-carboxylysine. Catalysis depends on His294, which acts as the Proton acceptor. Residues Arg295, His327, and Ser379 each coordinate substrate.

It belongs to the RuBisCO large chain family. Type I subfamily. As to quaternary structure, heterohexadecamer of 8 large chains and 8 small chains; disulfide-linked. The disulfide link is formed within the large subunit homodimers. Requires Mg(2+) as cofactor. The disulfide bond which can form in the large chain dimeric partners within the hexadecamer appears to be associated with oxidative stress and protein turnover.

Its subcellular location is the plastid. It localises to the chloroplast. The catalysed reaction is 2 (2R)-3-phosphoglycerate + 2 H(+) = D-ribulose 1,5-bisphosphate + CO2 + H2O. It catalyses the reaction D-ribulose 1,5-bisphosphate + O2 = 2-phosphoglycolate + (2R)-3-phosphoglycerate + 2 H(+). In terms of biological role, ruBisCO catalyzes two reactions: the carboxylation of D-ribulose 1,5-bisphosphate, the primary event in carbon dioxide fixation, as well as the oxidative fragmentation of the pentose substrate in the photorespiration process. Both reactions occur simultaneously and in competition at the same active site. The protein is Ribulose bisphosphate carboxylase large chain of Gerbera jamesonii (Transvaal daisy).